A 313-amino-acid chain; its full sequence is Expansin-like A4 (313 aa).

Residues 1–30 form the signal peptide; that stretch reads MDDNGDVHFCHRATAVVALLLLHLVVVANA. Residues 59 to 173 form the Expansin-like EG45 domain; the sequence is GGACGFGAAP…RRIPCEYRES (115 aa). N-linked (GlcNAc...) asparagine glycosylation is present at asparagine 124. The Expansin-like CBD domain occupies 188–281; it reads THLAIRFLYQ…DWRPGEVYDT (94 aa).

Belongs to the expansin family. Expansin-like A subfamily.

It localises to the secreted. In Oryza sativa subsp. japonica (Rice), this protein is Expansin-like A4 (EXLA4).